The primary structure comprises 467 residues: UDP-N-acetylmuramate--L-alanine ligase (467 aa).

114-120 (GTHGKTT) is a binding site for ATP.

The protein belongs to the MurCDEF family.

The protein localises to the cytoplasm. It catalyses the reaction UDP-N-acetyl-alpha-D-muramate + L-alanine + ATP = UDP-N-acetyl-alpha-D-muramoyl-L-alanine + ADP + phosphate + H(+). It functions in the pathway cell wall biogenesis; peptidoglycan biosynthesis. In terms of biological role, cell wall formation. In Nitrobacter winogradskyi (strain ATCC 25391 / DSM 10237 / CIP 104748 / NCIMB 11846 / Nb-255), this protein is UDP-N-acetylmuramate--L-alanine ligase.